We begin with the raw amino-acid sequence, 265 residues long: Catechol O-methyltransferase (265 aa).

Over 1 to 2 (ML) the chain is Cytoplasmic. The chain crosses the membrane as a helical; Signal-anchor for type II membrane protein span at residues 3-19 (LAAVSLGLLLLAFLLLL). Over 20–265 (RHLGWGLVAI…QGPGSSPVKS (246 aa)) the chain is Extracellular. Residues valine 85, glutamate 107, serine 115, glutamate 133, isoleucine 134, 160-163 (GASQ), serine 162, and aspartate 184 contribute to the S-adenosyl-L-methionine site. Residue aspartate 184 participates in Mg(2+) binding. Position 187 (lysine 187) interacts with substrate. The Mg(2+) site is built by aspartate 212 and asparagine 213. Asparagine 213 and glutamate 242 together coordinate substrate. Phosphoserine is present on residues serine 260, serine 261, and serine 265.

This sequence belongs to the class I-like SAM-binding methyltransferase superfamily. Cation-dependent O-methyltransferase family. Requires Mg(2+) as cofactor.

The protein localises to the cytoplasm. It localises to the cell membrane. It catalyses the reaction a catechol + S-adenosyl-L-methionine = a guaiacol + S-adenosyl-L-homocysteine + H(+). The enzyme catalyses 2-hydroxyestrone + S-adenosyl-L-methionine = 2-hydroxy-3-methoxy-estrone + S-adenosyl-L-homocysteine + H(+). The catalysed reaction is 4-hydroxyestrone + S-adenosyl-L-methionine = 4-methoxyestrone + S-adenosyl-L-homocysteine + H(+). It carries out the reaction 2-hydroxyestrone + S-adenosyl-L-methionine = 2-methoxyestrone + S-adenosyl-L-homocysteine + H(+). It catalyses the reaction 4-hydroxy-17beta-estradiol + S-adenosyl-L-methionine = 4-methoxy-17beta-estradiol + S-adenosyl-L-homocysteine + H(+). The enzyme catalyses 2-hydroxy-17beta-estradiol + S-adenosyl-L-methionine = 2-hydroxy-3-methoxy-17beta-estradiol + S-adenosyl-L-homocysteine + H(+). The catalysed reaction is 2-hydroxy-17beta-estradiol + S-adenosyl-L-methionine = 2-methoxy-17beta-estradiol + S-adenosyl-L-homocysteine + H(+). Catalyzes the O-methylation, and thereby the inactivation, of catecholamine neurotransmitters and catechol hormones. Also shortens the biological half-lives of certain neuroactive drugs, like L-DOPA, alpha-methyl DOPA and isoproterenol. The chain is Catechol O-methyltransferase from Mus musculus (Mouse).